We begin with the raw amino-acid sequence, 446 residues long: ATP synthase subunit b-delta (446 aa).

The interval 1-168 (MSTFIGQLVG…PAAADVQYPL (168 aa)) is ATP synthase subunit b. The chain crosses the membrane as a helical span at residues 4–24 (FIGQLVGFAAIVFLVVRYVVP). Residues 169-446 (MTKMRSSSRV…LAAAEAQLPD (278 aa)) form an ATP synthase subunit delta region.

The protein in the N-terminal section; belongs to the ATPase B chain family. In the C-terminal section; belongs to the ATPase delta chain family. F-type ATPases have 2 components, F(1) - the catalytic core - and F(0) - the membrane proton channel. F(1) has five subunits: alpha(3), beta(3), gamma(1), delta(1), epsilon(1). F(0) has three main subunits: a(1), b(2) and c(10-14). The alpha and beta chains form an alternating ring which encloses part of the gamma chain. F(1) is attached to F(0) by a central stalk formed by the gamma and epsilon chains, while a peripheral stalk is formed by the delta and b chains.

The protein localises to the cell membrane. Functionally, f(1)F(0) ATP synthase produces ATP from ADP in the presence of a proton or sodium gradient. F-type ATPases consist of two structural domains, F(1) containing the extramembraneous catalytic core and F(0) containing the membrane proton channel, linked together by a central stalk and a peripheral stalk. During catalysis, ATP synthesis in the catalytic domain of F(1) is coupled via a rotary mechanism of the central stalk subunits to proton translocation. This fusion protein includes a component of the F(0) channel (subunit b) and of the F(1) subunit (subunit delta). Two copies of subunit b and one of delta together form the peripheral 'stator' stalk which links F(1) to F(0). The polypeptide is ATP synthase subunit b-delta (atpFH) (Mycobacterium avium (strain 104)).